The chain runs to 178 residues: Cytochrome b6-f complex iron-sulfur subunit (178 aa).

A helical transmembrane segment spans residues 20 to 42; the sequence is LLTFGTATGVALGALYPVANYFM. Residues 65–161 enclose the Rieske domain; it reads KTGWLATHQA…VDIEDDAVLV (97 aa). 4 residues coordinate [2Fe-2S] cluster: cysteine 107, histidine 109, cysteine 125, and histidine 128. The cysteines at positions 112 and 127 are disulfide-linked.

This sequence belongs to the Rieske iron-sulfur protein family. The 4 large subunits of the cytochrome b6-f complex are cytochrome b6, subunit IV (17 kDa polypeptide, PetD), cytochrome f and the Rieske protein, while the 4 small subunits are PetG, PetL, PetM and PetN. The complex functions as a dimer. [2Fe-2S] cluster serves as cofactor.

It localises to the cellular thylakoid membrane. It catalyses the reaction 2 oxidized [plastocyanin] + a plastoquinol + 2 H(+)(in) = 2 reduced [plastocyanin] + a plastoquinone + 4 H(+)(out). Component of the cytochrome b6-f complex, which mediates electron transfer between photosystem II (PSII) and photosystem I (PSI), cyclic electron flow around PSI, and state transitions. This chain is Cytochrome b6-f complex iron-sulfur subunit, found in Prochlorococcus marinus (strain MIT 9215).